A 610-amino-acid polypeptide reads, in one-letter code: UvrABC system protein C (610 aa).

The GIY-YIG domain maps to 16–94 (SQPGVYRMYD…IKLYQPRYNV (79 aa)). Positions 204-239 (DQVLTQLIARMEKASQDLAFEEAARIRDQIQAVRRV) constitute a UVR domain.

It belongs to the UvrC family. In terms of assembly, interacts with UvrB in an incision complex.

The protein localises to the cytoplasm. Its function is as follows. The UvrABC repair system catalyzes the recognition and processing of DNA lesions. UvrC both incises the 5' and 3' sides of the lesion. The N-terminal half is responsible for the 3' incision and the C-terminal half is responsible for the 5' incision. The sequence is that of UvrABC system protein C from Salmonella enteritidis PT4 (strain P125109).